We begin with the raw amino-acid sequence, 262 residues long: MKTPFGKSPAQRSRADAGHTRVSASMMKKRTSHKKHRNNVGPSKPISQPRRNIVGCRIQHGWKEGSGPITQWKGTVLDQVPVNPSLYLIKYDGFDCVYGLELHKDERVSALEVLPDRVASSRISDAHLADTMIGKAVEHMFETEDGSKDEWRGMVLARAPIMNTWFYITYEKDPVLYMYQLLDDYKEGDLRIMPDSNDSPPAEREPGEVVDSLVGKQVEYAKEDGSKRTGMVIHQVEAKPSVYFIKFDDDFHIYVYDLVKTS.

The interval 1–49 is disordered; the sequence is MKTPFGKSPAQRSRADAGHTRVSASMMKKRTSHKKHRNNVGPSKPISQP. Residues 27 to 38 are compositionally biased toward basic residues; it reads MKKRTSHKKHRN.

This sequence belongs to the SPIN/STSY family. As to expression, expressed predominantly in ovarian granulosa and thecal cell.

The protein resides in the nucleus. In terms of biological role, may play a role in mitosis. This chain is Spindlin-W (SPINW), found in Gallus gallus (Chicken).